The following is a 506-amino-acid chain: Nostrin (506 aa).

One can recognise an F-BAR domain in the interval 1 to 260 (MRDPLTDCPY…AISKIDIEKD (260 aa)). S114 carries the phosphoserine modification. A coiled-coil region spans residues 160 to 222 (SMTEKEKRKL…LELEKERIQL (63 aa)). The REM-1 domain maps to 292 to 372 (AMDKERRKSL…SYKLSSMLAE (81 aa)). Residues 438–497 (LSSRLCKALYSFQARQDDELNLEKGDIVIIHEKKEGGWWFGSLNGKKGHFPAAYVEELPS) form the SH3 domain. S479 carries the phosphoserine modification.

Homotrimer. Interacts with DAB2. Interacts with NOS3, DNM2, WASL and CAV1. Interacts (via SH3 domain) with DNM2; this interaction allows the recruitment of NOS3 to dynamin-positive structures. In terms of tissue distribution, expressed at highest levels in heart, kidney, placenta and lung, and at lowest levels in brain, thymus and spleen. Present in vascular endothelial cells and placenta. Over-expressed in placenta from women with pre-eclampsia (at protein level).

It is found in the cell membrane. The protein resides in the cytoplasmic vesicle. The protein localises to the cytoplasm. Its subcellular location is the cytoskeleton. It localises to the nucleus. Functionally, multivalent adapter protein which may decrease NOS3 activity by inducing its translocation away from the plasma membrane. This Homo sapiens (Human) protein is Nostrin.